The following is a 144-amino-acid chain: MATTLPVQRHPRSLFPEFSELFAAFPSFAGLRPTFDTRLMRLEDEMKEGRYEVRAELPGVDPDKDVDIMVRDGQLTIKAERTEQKDFDGRSEFAYGSFVRTVSLPVGADEDDIKATYDKGILTVSVAVSEGKPTEKHIQIRSTN.

A sHSP domain is found at 33–143 (PTFDTRLMRL…TEKHIQIRST (111 aa)).

Belongs to the small heat shock protein (HSP20) family.

The protein localises to the secreted. It localises to the cell wall. Its subcellular location is the cytoplasm. Acts as a chaperone. This Mycobacterium bovis (strain ATCC BAA-935 / AF2122/97) protein is Alpha-crystallin (hspX).